The following is a 792-amino-acid chain: Endonuclease MutS2 (792 aa).

344–351 (GPNTGGKT) is an ATP binding site. Residues 716 to 791 (IHLRGLHVEE…GLGVTVVYLE (76 aa)) enclose the Smr domain.

This sequence belongs to the DNA mismatch repair MutS family. MutS2 subfamily. In terms of assembly, homodimer. Binds to stalled ribosomes, contacting rRNA.

Functionally, endonuclease that is involved in the suppression of homologous recombination and thus may have a key role in the control of bacterial genetic diversity. Acts as a ribosome collision sensor, splitting the ribosome into its 2 subunits. Detects stalled/collided 70S ribosomes which it binds and splits by an ATP-hydrolysis driven conformational change. Acts upstream of the ribosome quality control system (RQC), a ribosome-associated complex that mediates the extraction of incompletely synthesized nascent chains from stalled ribosomes and their subsequent degradation. Probably generates substrates for RQC. In Thermomicrobium roseum (strain ATCC 27502 / DSM 5159 / P-2), this protein is Endonuclease MutS2.